Here is a 718-residue protein sequence, read N- to C-terminus: 1-deoxy-D-xylulose-5-phosphate synthase 1, chloroplastic (718 aa).

A chloroplast-targeting transit peptide spans 1-55; it reads MAFCALSFPAHISRATTPAPSDLQKSSSFSSRFYWGADLLRPSQYKVRKIQSGVY. Thiamine diphosphate contacts are provided by residues His143 and 184–186; that span reads GHS. Asp215 provides a ligand contact to Mg(2+). Thiamine diphosphate is bound by residues 216–217, Asn244, Tyr365, and Glu447; that span reads GA. A Mg(2+)-binding site is contributed by Asn244.

The protein belongs to the transketolase family. DXPS subfamily. Homodimer. The cofactor is Mg(2+). It depends on thiamine diphosphate as a cofactor. In terms of tissue distribution, expressed in trichomes, leaves, flowers, roots and stems.

The protein localises to the plastid. Its subcellular location is the chloroplast. It carries out the reaction D-glyceraldehyde 3-phosphate + pyruvate + H(+) = 1-deoxy-D-xylulose 5-phosphate + CO2. It participates in metabolic intermediate biosynthesis; 1-deoxy-D-xylulose 5-phosphate biosynthesis; 1-deoxy-D-xylulose 5-phosphate from D-glyceraldehyde 3-phosphate and pyruvate: step 1/1. In terms of biological role, catalyzes the acyloin condensation reaction between C atoms 2 and 3 of pyruvate and glyceraldehyde 3-phosphate to yield 1-deoxy-D-xylulose-5-phosphate (DXP). The polypeptide is 1-deoxy-D-xylulose-5-phosphate synthase 1, chloroplastic (Cannabis sativa (Hemp)).